The chain runs to 362 residues: Malate dehydrogenase (362 aa).

Belongs to the LDH2/MDH2 oxidoreductase family. In terms of assembly, homodimer.

Its subcellular location is the cytoplasm. It catalyses the reaction (S)-malate + NAD(+) = oxaloacetate + NADH + H(+). This chain is Malate dehydrogenase (mdh), found in Pyrococcus abyssi (strain GE5 / Orsay).